An 89-amino-acid chain; its full sequence is Small ribosomal subunit protein uS14 (89 aa).

The protein belongs to the universal ribosomal protein uS14 family. Part of the 30S ribosomal subunit. Contacts proteins S3 and S10.

Functionally, binds 16S rRNA, required for the assembly of 30S particles and may also be responsible for determining the conformation of the 16S rRNA at the A site. The sequence is that of Small ribosomal subunit protein uS14 from Lacticaseibacillus casei (strain BL23) (Lactobacillus casei).